A 216-amino-acid polypeptide reads, in one-letter code: 2-hydroxy-3-keto-5-methylthiopentenyl-1-phosphate phosphatase (216 aa).

It belongs to the HAD-like hydrolase superfamily. MtnX family.

It catalyses the reaction 2-hydroxy-5-methylsulfanyl-3-oxopent-1-enyl phosphate + H2O = 1,2-dihydroxy-5-(methylsulfanyl)pent-1-en-3-one + phosphate. It participates in amino-acid biosynthesis; L-methionine biosynthesis via salvage pathway; L-methionine from S-methyl-5-thio-alpha-D-ribose 1-phosphate: step 4/6. Dephosphorylates 2-hydroxy-3-keto-5-methylthiopentenyl-1-phosphate (HK-MTPenyl-1-P) yielding 1,2-dihydroxy-3-keto-5-methylthiopentene (DHK-MTPene). The sequence is that of 2-hydroxy-3-keto-5-methylthiopentenyl-1-phosphate phosphatase from Exiguobacterium sp. (strain ATCC BAA-1283 / AT1b).